The chain runs to 122 residues: uncharacterized protein (122 aa).

Residues 97–122 (TSRNGFSNPNKDGKKNDDDNNSSSKS) are disordered.

This is an uncharacterized protein from Mycoplasma genitalium (strain ATCC 33530 / DSM 19775 / NCTC 10195 / G37) (Mycoplasmoides genitalium).